The chain runs to 83 residues: Toxin TdNa3 (83 aa).

Positions 1 to 20 (MKGMIMLISCLMLIDVVVES) are cleaved as a signal peptide. Residues 21 to 82 (KNGYIIEPKG…IFDYYNNKCG (62 aa)) form the LCN-type CS-alpha/beta domain. Disulfide bonds link Cys-31–Cys-81, Cys-35–Cys-57, Cys-43–Cys-62, and Cys-47–Cys-64. Cys-81 is modified (cysteine amide).

It belongs to the long (4 C-C) scorpion toxin superfamily. Sodium channel inhibitor family. Beta subfamily. As to expression, expressed by the venom gland.

The protein resides in the secreted. In terms of biological role, inhibits the sodium currents (Nav) in an apparent irreversible manner. Produces small depolarization and induces repetitive firing in squid axons. Is specific for arthropods (crickets, triatomides, crabs and squids), but is non-toxic to mice. This is Toxin TdNa3 from Tityus discrepans (Venezuelan scorpion).